A 123-amino-acid polypeptide reads, in one-letter code: NADH-quinone oxidoreductase subunit A (123 aa).

The next 3 membrane-spanning stretches (helical) occupy residues 11 to 31 (YLPI…IMML), 68 to 88 (LVAI…PWAI), and 93 to 113 (IGKI…IGFI).

Belongs to the complex I subunit 3 family. NDH-1 is composed of 14 different subunits. Subunits NuoA, H, J, K, L, M, N constitute the membrane sector of the complex.

Its subcellular location is the cell inner membrane. It catalyses the reaction a quinone + NADH + 5 H(+)(in) = a quinol + NAD(+) + 4 H(+)(out). NDH-1 shuttles electrons from NADH, via FMN and iron-sulfur (Fe-S) centers, to quinones in the respiratory chain. The immediate electron acceptor for the enzyme in this species is believed to be ubiquinone. Couples the redox reaction to proton translocation (for every two electrons transferred, four hydrogen ions are translocated across the cytoplasmic membrane), and thus conserves the redox energy in a proton gradient. This Rickettsia typhi (strain ATCC VR-144 / Wilmington) protein is NADH-quinone oxidoreductase subunit A.